The sequence spans 217 residues: Thiamine-phosphate synthase (217 aa).

4-amino-2-methyl-5-(diphosphooxymethyl)pyrimidine contacts are provided by residues 39–43 and Asn71; that span reads QLRRK. Mg(2+)-binding residues include Asp72 and Asp91. Residue Ser110 participates in 4-amino-2-methyl-5-(diphosphooxymethyl)pyrimidine binding. 137–139 is a 2-[(2R,5Z)-2-carboxy-4-methylthiazol-5(2H)-ylidene]ethyl phosphate binding site; that stretch reads SPT. Lys140 provides a ligand contact to 4-amino-2-methyl-5-(diphosphooxymethyl)pyrimidine. Residues Gly173 and 193-194 contribute to the 2-[(2R,5Z)-2-carboxy-4-methylthiazol-5(2H)-ylidene]ethyl phosphate site; that span reads IS.

Belongs to the thiamine-phosphate synthase family. Mg(2+) serves as cofactor.

It catalyses the reaction 2-[(2R,5Z)-2-carboxy-4-methylthiazol-5(2H)-ylidene]ethyl phosphate + 4-amino-2-methyl-5-(diphosphooxymethyl)pyrimidine + 2 H(+) = thiamine phosphate + CO2 + diphosphate. The enzyme catalyses 2-(2-carboxy-4-methylthiazol-5-yl)ethyl phosphate + 4-amino-2-methyl-5-(diphosphooxymethyl)pyrimidine + 2 H(+) = thiamine phosphate + CO2 + diphosphate. The catalysed reaction is 4-methyl-5-(2-phosphooxyethyl)-thiazole + 4-amino-2-methyl-5-(diphosphooxymethyl)pyrimidine + H(+) = thiamine phosphate + diphosphate. The protein operates within cofactor biosynthesis; thiamine diphosphate biosynthesis; thiamine phosphate from 4-amino-2-methyl-5-diphosphomethylpyrimidine and 4-methyl-5-(2-phosphoethyl)-thiazole: step 1/1. In terms of biological role, condenses 4-methyl-5-(beta-hydroxyethyl)thiazole monophosphate (THZ-P) and 2-methyl-4-amino-5-hydroxymethyl pyrimidine pyrophosphate (HMP-PP) to form thiamine monophosphate (TMP). In Bordetella bronchiseptica (strain ATCC BAA-588 / NCTC 13252 / RB50) (Alcaligenes bronchisepticus), this protein is Thiamine-phosphate synthase.